We begin with the raw amino-acid sequence, 104 residues long: Pterin-4-alpha-carbinolamine dehydratase (104 aa).

Ala-2 carries the N-acetylalanine modification. Residues 61-63 and 78-81 contribute to the substrate site; these read DHH and STHE.

This sequence belongs to the pterin-4-alpha-carbinolamine dehydratase family. As to quaternary structure, homotetramer and homodimer. The major tissues expressing cDcoH are hypothalamus, kidney and liver.

Its subcellular location is the cytoplasm. It is found in the nucleus. It catalyses the reaction (4aS,6R)-4a-hydroxy-L-erythro-5,6,7,8-tetrahydrobiopterin = (6R)-L-erythro-6,7-dihydrobiopterin + H2O. Functionally, involved in tetrahydrobiopterin biosynthesis. Seems to both prevent the formation of 7-pterins and accelerate the formation of quinonoid-BH2. Coactivator for HNF1A-dependent transcription. Regulates the dimerization of homeodomain protein HNF1A and enhances its transcriptional activity. Also acts as a coactivator for HNF1B-dependent transcription. This is Pterin-4-alpha-carbinolamine dehydratase (PCBD1) from Gallus gallus (Chicken).